Consider the following 477-residue polypeptide: Ribulose bisphosphate carboxylase large chain (477 aa).

Residues 1–2 constitute a propeptide that is removed on maturation; sequence MS. An N-acetylproline modification is found at P3. Substrate is bound by residues N123 and T173. The Proton acceptor role is filled by K175. K177 serves as a coordination point for substrate. Mg(2+) contacts are provided by K201, D203, and E204. At K201 the chain carries N6-carboxylysine. H294 acts as the Proton acceptor in catalysis. Residues R295, H327, and S379 each contribute to the substrate site.

The protein belongs to the RuBisCO large chain family. Type I subfamily. As to quaternary structure, heterohexadecamer of 8 large chains and 8 small chains; disulfide-linked. The disulfide link is formed within the large subunit homodimers. Requires Mg(2+) as cofactor. The disulfide bond which can form between Cys-247 in the large chain dimeric partners within the hexadecamer appears to be associated with oxidative stress and protein turnover.

Its subcellular location is the plastid. The protein resides in the chloroplast. It carries out the reaction 2 (2R)-3-phosphoglycerate + 2 H(+) = D-ribulose 1,5-bisphosphate + CO2 + H2O. The enzyme catalyses D-ribulose 1,5-bisphosphate + O2 = 2-phosphoglycolate + (2R)-3-phosphoglycerate + 2 H(+). Its function is as follows. RuBisCO catalyzes two reactions: the carboxylation of D-ribulose 1,5-bisphosphate, the primary event in carbon dioxide fixation, as well as the oxidative fragmentation of the pentose substrate in the photorespiration process. Both reactions occur simultaneously and in competition at the same active site. This is Ribulose bisphosphate carboxylase large chain (rbcL) from Triticum aestivum (Wheat).